The following is a 294-amino-acid chain: Transmembrane protein 178B (294 aa).

Residues 1–23 form the signal peptide; sequence MAAGKLLLYAGLSLSLCALGMLA. The next 3 membrane-spanning stretches (helical) occupy residues 172–192, 206–226, and 252–272; these read AGFM…GMLG, LLFL…VAGI, and MFCA…CTLA.

Belongs to the TMEM178 family.

The protein resides in the membrane. In Danio rerio (Zebrafish), this protein is Transmembrane protein 178B (tmem178b).